Here is a 318-residue protein sequence, read N- to C-terminus: UDP-N-acetylenolpyruvoylglucosamine reductase (318 aa).

The region spanning 39-202 (VGGPADLLVR…TRVQLTLRPG (164 aa)) is the FAD-binding PCMH-type domain. Residue Arg182 is part of the active site. Residues 214 to 223 (DRDGRRRTQP) show a composition bias toward basic and acidic residues. The segment at 214-235 (DRDGRRRTQPLDRPTFGSTFTN) is disordered. The active-site Proton donor is the Ser231. Glu301 is a catalytic residue.

It belongs to the MurB family. The cofactor is FAD.

The protein localises to the cytoplasm. The enzyme catalyses UDP-N-acetyl-alpha-D-muramate + NADP(+) = UDP-N-acetyl-3-O-(1-carboxyvinyl)-alpha-D-glucosamine + NADPH + H(+). The protein operates within cell wall biogenesis; peptidoglycan biosynthesis. In terms of biological role, cell wall formation. In Anaeromyxobacter sp. (strain Fw109-5), this protein is UDP-N-acetylenolpyruvoylglucosamine reductase.